We begin with the raw amino-acid sequence, 454 residues long: Tubulin beta-2 chain (454 aa).

Residues Gln-11, Glu-69, Ser-138, Gly-142, Thr-143, Gly-144, Asn-204, and Asn-226 each coordinate GTP. Glu-69 is a Mg(2+) binding site. A disordered region spans residues 426 to 454 (QEASVDDEAMEDDAEAEGGAGQNEAVEEF). Acidic residues predominate over residues 429–441 (SVDDEAMEDDAEA).

This sequence belongs to the tubulin family. Dimer of alpha and beta chains. A typical microtubule is a hollow water-filled tube with an outer diameter of 25 nm and an inner diameter of 15 nM. Alpha-beta heterodimers associate head-to-tail to form protofilaments running lengthwise along the microtubule wall with the beta-tubulin subunit facing the microtubule plus end conferring a structural polarity. Microtubules usually have 13 protofilaments but different protofilament numbers can be found in some organisms and specialized cells. Requires Mg(2+) as cofactor.

The protein localises to the cytoplasm. Its subcellular location is the cytoskeleton. It localises to the spindle. It is found in the nucleus. Its function is as follows. Tubulin is the major constituent of microtubules, a cylinder consisting of laterally associated linear protofilaments composed of alpha- and beta-tubulin heterodimers. Microtubules grow by the addition of GTP-tubulin dimers to the microtubule end, where a stabilizing cap forms. Below the cap, tubulin dimers are in GDP-bound state, owing to GTPase activity of alpha-tubulin. In terms of biological role, this is the major beta tubulin of mitotic spindle. The sequence is that of Tubulin beta-2 chain (BETC) from Physarum polycephalum (Slime mold).